Reading from the N-terminus, the 347-residue chain is Probable zinc transporter 8 (347 aa).

A signal peptide spans 1–27 (MATTTQHMNQIFLVLLLISFAISPAIS). Topologically, residues 28–51 (TVPKECETDSTDSCIDKTKALPLK) are extracellular. A helical transmembrane segment spans residues 52–72 (IVAIVAILVTSMIGVAAPLFS). The Cytoplasmic portion of the chain corresponds to 73–83 (RYVTFLHPDGK). Residues 84 to 104 (IFMIIKCFASGIILGTGFMHV) form a helical membrane-spanning segment. The Extracellular portion of the chain corresponds to 105–124 (LPDSFEMLSSPCLEDNPWHK). The helical transmembrane segment at 125-145 (FPFTGFVAMLSGLVTLAIDSI) threads the bilayer. The Cytoplasmic portion of the chain corresponds to 146–192 (ATSLYTKKAVADDSEERTTPMIIQIDHLPLTTKERSSTCSKQLLRYR). The helical transmembrane segment at 193-213 (VIATVLELGIIVHSVVIGLSL) threads the bilayer. Over 214–224 (GATNDTCTIKG) the chain is Extracellular. Residues 225–245 (LIAALCFHQMFEGMGLGGCIL) traverse the membrane as a helical segment. Over 246–254 (QAEYTNVKK) the chain is Cytoplasmic. The helical transmembrane segment at 255 to 275 (FVMAFFFAVTTPSGIALGIAL) threads the bilayer. Residues 276–286 (SSVYKDNSPTA) lie on the Extracellular side of the membrane. A helical transmembrane segment spans residues 287–307 (LITVGLLNACSAGLLIYMALV). At 308–326 (DLLAAEFMGSMLQRSVKLQ) the chain is on the cytoplasmic side. The chain crosses the membrane as a helical span at residues 327–347 (LNCFGAALLGCGGMSVLAKWA).

The protein belongs to the ZIP transporter (TC 2.A.5) family.

Its subcellular location is the cell membrane. Its function is as follows. Probably mediates zinc uptake from the rhizosphere. The polypeptide is Probable zinc transporter 8 (ZIP8) (Arabidopsis thaliana (Mouse-ear cress)).